The chain runs to 259 residues: Kynurenine formamidase (259 aa).

The HGGXW signature appears at 34–38; sequence HGGAW. The active-site Nucleophile is the Ser-103. Active-site residues include Asp-196 and His-228.

It belongs to the kynurenine formamidase family. Homodimer.

It carries out the reaction N-formyl-L-kynurenine + H2O = L-kynurenine + formate + H(+). It participates in amino-acid degradation; L-tryptophan degradation via kynurenine pathway; L-kynurenine from L-tryptophan: step 2/2. Functionally, catalyzes the hydrolysis of N-formyl-L-kynurenine to L-kynurenine, the second step in the kynurenine pathway of tryptophan degradation. Kynurenine may be further oxidized to nicotinic acid, NAD(H) and NADP(H). Required for elimination of toxic metabolites. This chain is Kynurenine formamidase, found in Meyerozyma guilliermondii (strain ATCC 6260 / CBS 566 / DSM 6381 / JCM 1539 / NBRC 10279 / NRRL Y-324) (Yeast).